We begin with the raw amino-acid sequence, 111 residues long: Cornifelin (111 aa).

The protein belongs to the cornifelin family. Directly or indirectly cross-linked to CE proteins loricin and involucrin (IVL).

It is found in the cytoplasm. Functionally, part of the insoluble cornified cell envelope (CE) of stratified squamous epithelia. The sequence is that of Cornifelin (Cnfn) from Mus musculus (Mouse).